A 370-amino-acid polypeptide reads, in one-letter code: Aminomethyltransferase (370 aa).

It belongs to the GcvT family. As to quaternary structure, the glycine cleavage system is composed of four proteins: P, T, L and H.

The catalysed reaction is N(6)-[(R)-S(8)-aminomethyldihydrolipoyl]-L-lysyl-[protein] + (6S)-5,6,7,8-tetrahydrofolate = N(6)-[(R)-dihydrolipoyl]-L-lysyl-[protein] + (6R)-5,10-methylene-5,6,7,8-tetrahydrofolate + NH4(+). In terms of biological role, the glycine cleavage system catalyzes the degradation of glycine. In Prochlorococcus marinus (strain MIT 9215), this protein is Aminomethyltransferase.